Here is a 122-residue protein sequence, read N- to C-terminus: Large ribosomal subunit protein uL14 (122 aa).

It belongs to the universal ribosomal protein uL14 family. Part of the 50S ribosomal subunit. Forms a cluster with proteins L3 and L19. In the 70S ribosome, L14 and L19 interact and together make contacts with the 16S rRNA in bridges B5 and B8.

Binds to 23S rRNA. Forms part of two intersubunit bridges in the 70S ribosome. This chain is Large ribosomal subunit protein uL14, found in Burkholderia multivorans (strain ATCC 17616 / 249).